Consider the following 904-residue polypeptide: DNA replication licensing factor MCM2 (904 aa).

Positions 1–12 (MAESSESLSASS) are enriched in low complexity. Residues 1–166 (MAESSESLSA…ATEDGEEDEE (166 aa)) form a disordered region. Ala2 bears the N-acetylalanine mark. Positions 2 to 257 (AESSESLSAS…LPEAPAELLQ (256 aa)) are interaction with KAT7. Phosphoserine is present on residues Ser12 and Ser21. Residue Thr25 is modified to Phosphothreonine. A phosphoserine mark is found at Ser26, Ser27, and Ser32. Position 39 is a phosphothreonine (Thr39). Ser40 carries the post-translational modification Phosphoserine; by CDC7. The residue at position 41 (Ser41) is a Phosphoserine. Ser53 carries the phosphoserine; by CDC7 modification. Residue Thr59 is modified to Phosphothreonine. The interaction with DNJC9 stretch occupies residues 61–130 (GPMEEEEDGE…DREAGRGLGR (70 aa)). A compositionally biased stretch (acidic residues) spans 62–73 (PMEEEEDGEELI). Residues 76-85 (GMERDYRPIP) show a composition bias toward basic and acidic residues. Acidic residues predominate over residues 88–104 (DVYEAEGLALDDEDVEE). At Ser108 the chain carries Phosphoserine. Over residues 111–125 (EAAERTMRQRDREAG) the composition is skewed to basic and acidic residues. Position 137 is a phosphotyrosine (Tyr137). Ser139 and Ser140 each carry phosphoserine. Lys178 participates in a covalent cross-link: Glycyl lysine isopeptide (Lys-Gly) (interchain with G-Cter in SUMO2). Residue Lys216 is modified to N6-acetyllysine. The C4-type zinc-finger motif lies at 329 to 355 (CSKCNFVLGPFCQSQNQEVKPGSCPEC). 2 positions are modified to phosphoserine: Ser381 and Ser484. The MCM domain occupies 473-680 (IGEKIFASIA…QDEMLARFVV (208 aa)). Residues Ser530 and Gln531 each coordinate ADP. An Arginine finger motif is present at residues 655-658 (SRFD).

The protein belongs to the MCM family. In terms of assembly, component of the MCM2-7 complex. The complex forms a toroidal hexameric ring with the proposed subunit order MCM2-MCM6-MCM4-MCM7-MCM3-MCM5. Component of the CMG helicase complex, a hexameric ring of related MCM2-7 subunits stabilized by CDC45 and the tetrameric GINS complex. Interacts with DBF4. Interacts with KAT7. May interact with MCM10. Component of the replisome complex composed of at least DONSON, MCM2, MCM7, PCNA and TICRR. Forms a co-chaperone complex with DNAJC9 and histone H3.3-H4 heterodimers. Within the complex, interacts (via N-terminus) with DNAJC9 (via C-terminus); the interaction is histone-dependent. Interacts with AGER/RAGE; the interaction is increased following DNA replication stress and stabilizes the MCM2-7 complex at replication forks. Phosphorylated on Ser-108 by ATR in proliferating cells. Ser-108 proliferation is increased by genotoxic agents. Ser-40 is mediated by the CDC7-DBF4 and CDC7-DBF4B complexes, while Ser-53 phosphorylation is only mediated by the CDC7-DBF4 complex. Phosphorylation by the CDC7-DBF4 complex during G1/S phase is required for the initiation of DNA replication. In terms of processing, acetylated by MCM3AP. Post-translationally, O-glycosylated (O-GlcNAcylated), in a cell cycle-dependent manner.

The protein localises to the nucleus. The protein resides in the chromosome. The enzyme catalyses ATP + H2O = ADP + phosphate + H(+). Acts as a component of the MCM2-7 complex (MCM complex) which is the replicative helicase essential for 'once per cell cycle' DNA replication initiation and elongation in eukaryotic cells. Core component of CDC45-MCM-GINS (CMG) helicase, the molecular machine that unwinds template DNA during replication, and around which the replisome is built. The active ATPase sites in the MCM2-7 ring are formed through the interaction surfaces of two neighboring subunits such that a critical structure of a conserved arginine finger motif is provided in trans relative to the ATP-binding site of the Walker A box of the adjacent subunit. The six ATPase active sites, however, are likely to contribute differentially to the complex helicase activity. Required for the entry in S phase and for cell division. Plays a role in terminally differentiated hair cells development of the cochlea and induces cells apoptosis. The polypeptide is DNA replication licensing factor MCM2 (Mcm2) (Mus musculus (Mouse)).